Consider the following 501-residue polypeptide: Dipeptide and tripeptide permease A (501 aa).

The Cytoplasmic segment spans residues 1–21; the sequence is MSTANKKPTESVSLNAFKQPK. Residues 22–44 form a helical membrane-spanning segment; it reads AFYLIFSIELWERFGYYGLQGIM. Over 45–59 the chain is Periplasmic; the sequence is AVYLVKQLGMSEADS. A helical membrane pass occupies residues 60 to 80; that stretch reads ITLFSSFSALVYGLVAIGGWL. Residues 81–89 lie on the Cytoplasmic side of the membrane; that stretch reads GDKILGTKR. Residues 90 to 110 form a helical membrane-spanning segment; the sequence is VIMLGAVVLAIGYALVAWSGH. A topological domain (periplasmic) is located at residue Asp111. A helical membrane pass occupies residues 112–132; the sequence is AGIVYMGMAAIAVGNGLFKAN. Topologically, residues 133 to 153 are cytoplasmic; sequence PSSLLSTCYAKDDPRLDGAFT. A helical membrane pass occupies residues 154–174; sequence MYYMSVNIGSFFSMLATPWLA. Topologically, residues 175–178 are periplasmic; sequence ARYG. A helical transmembrane segment spans residues 179-199; that stretch reads WSTAFALSVVGMLITVVNFAF. The Cytoplasmic segment spans residues 200–219; it reads CQRWVKSYGSKPDFEPINFR. A helical transmembrane segment spans residues 220–240; the sequence is NLLLTIVGIVVLIAVATWLLH. Residues 241–246 are Periplasmic-facing; the sequence is NQDIAR. The helical transmembrane segment at 247–267 threads the bilayer; the sequence is MVLGVIALGIVIIFGKEAFSM. The Cytoplasmic segment spans residues 268–274; that stretch reads HGAARRK. The helical transmembrane segment at 275 to 295 threads the bilayer; sequence MIVAFILMLQAIIFFVLYSQM. The Periplasmic segment spans residues 296–320; sequence PTSLNFFAIRNVEHSILGIAFEPEQ. Residues 321 to 341 form a helical membrane-spanning segment; the sequence is YQALNPFWIITGSPILAAIYN. Topologically, residues 342 to 352 are cytoplasmic; sequence RMGDTLPMPMK. Residues 353–373 form a helical membrane-spanning segment; that stretch reads FAIGMVLCSGAFLILPLGAKF. The Periplasmic segment spans residues 374 to 383; it reads ANDAGIVSVN. Residues 384–404 traverse the membrane as a helical segment; the sequence is WLIASYGLQSIGELMISGLGL. At 405 to 414 the chain is on the cytoplasmic side; the sequence is AMVAQLVPQR. Residues 415–435 traverse the membrane as a helical segment; sequence LMGFIMGSWFLTTAGANIIGG. Topologically, residues 436-459 are periplasmic; the sequence is YVANLMAVPSDVTDPLMSLEVYGR. A helical transmembrane segment spans residues 460-480; the sequence is VFMQIGIATAVIAVLMLLTAP. Residues 481–501 lie on the Cytoplasmic side of the membrane; that stretch reads KLNRMTQDDDTAEKGSKAATV.

It belongs to the major facilitator superfamily. Proton-dependent oligopeptide transporter (POT/PTR) (TC 2.A.17) family. DtpA subfamily.

The protein resides in the cell inner membrane. In terms of biological role, proton-dependent permease that transports di- and tripeptides. The polypeptide is Dipeptide and tripeptide permease A (Salmonella typhi).